Here is a 202-residue protein sequence, read N- to C-terminus: Large ribosomal subunit protein uL4 (202 aa).

Polar residues predominate over residues 42-52 (GTKAQKSRSQV). Residues 42–70 (GTKAQKSRSQVSGTTKKSKKQKGGGARHG) are disordered.

Belongs to the universal ribosomal protein uL4 family. In terms of assembly, part of the 50S ribosomal subunit.

In terms of biological role, one of the primary rRNA binding proteins, this protein initially binds near the 5'-end of the 23S rRNA. It is important during the early stages of 50S assembly. It makes multiple contacts with different domains of the 23S rRNA in the assembled 50S subunit and ribosome. Functionally, forms part of the polypeptide exit tunnel. This Xylella fastidiosa (strain 9a5c) protein is Large ribosomal subunit protein uL4.